A 430-amino-acid chain; its full sequence is Alpha-humulene synthase asR6 (430 aa).

Belongs to the terpene synthase family. Alpha-humulene synthase eupE subfamily. Mg(2+) serves as cofactor.

It carries out the reaction (2E,6E)-farnesyl diphosphate = alpha-humulene + diphosphate. It participates in secondary metabolite biosynthesis; terpenoid biosynthesis. Alpha-humulene synthase; part of the gene cluster that mediates the biosynthesis of xenovulene A, an unusual meroterpenoid that has potent inhibitory effects on the human gamma-aminobutyrate A (GABAA) benzodiazepine receptor. The first step of xenovulene A biosynthesis is the biosynthesis of 3-methylorcinaldehyde performed by the non-reducing polyketide synthase aspks1. The salicylate hydroxylase asL1 then catalyzes the oxidative dearomatization of 3-methylorcinaldehyde to yield a dearomatized hydroxycyclohexadione. The 2-oxoglutarate-dependent dioxygenase asL3 further catalyzes the oxidative ring expansion to provide the first tropolone metabolite. The cytochrome P450 monooxygenase asR2 allows the synthesis of tropolone hemiacetal. In parallel, a previously unrecognised class of terpene cyclase, asR6, produces alpha-humulene from farnesylpyrophosphate (FPP). The putative Diels-Alderase asR5 probably catalyzes the formation of the tropolone-humulene skeleton by linking humulene and the polyketide moiety. Oxidative-ring contractions catalyzed by asL4 and asL6 then processively remove carbon atoms from the polyketide to yield xenovulene A. In Sarocladium schorii (Acremonium strictum (strain IMI 501407)), this protein is Alpha-humulene synthase asR6.